The chain runs to 383 residues: ATP phosphoribosyltransferase regulatory subunit (383 aa).

Belongs to the class-II aminoacyl-tRNA synthetase family. HisZ subfamily. In terms of assembly, heteromultimer composed of HisG and HisZ subunits.

Its subcellular location is the cytoplasm. Its pathway is amino-acid biosynthesis; L-histidine biosynthesis; L-histidine from 5-phospho-alpha-D-ribose 1-diphosphate: step 1/9. In terms of biological role, required for the first step of histidine biosynthesis. May allow the feedback regulation of ATP phosphoribosyltransferase activity by histidine. This Neisseria gonorrhoeae (strain ATCC 700825 / FA 1090) protein is ATP phosphoribosyltransferase regulatory subunit.